A 177-amino-acid chain; its full sequence is MQRRLVQQWSVAVFLLSYAVPSCGRSVEGLSRRLKRAVSEHQLLHDKGKSIQDLRRRFFLHHLIAEIHTAEIRATSEVSPNSKPSPNTKNHPVRFGSDDEGRYLTQETNKVETYKEQPLKTPGKKKKGKPGKRKEQEKKKRRTRSAWLDSGVTGSGLEGDHLSDTSTTSLELDSRRH.

An N-terminal signal peptide occupies residues 1-24; sequence MQRRLVQQWSVAVFLLSYAVPSCG. Positions 25–34 are excised as a propeptide; that stretch reads RSVEGLSRRL. The interval 57 to 68 is important for receptor binding; that stretch reads RFFLHHLIAEIH. Residues 74–177 are disordered; that stretch reads ATSEVSPNSK…TSLELDSRRH (104 aa). Positions 76-90 are enriched in polar residues; it reads SEVSPNSKPSPNTKN. The Nuclear localization signal signature appears at 108–129; that stretch reads TNKVETYKEQPLKTPGKKKKGK. Residues 109–118 show a composition bias toward basic and acidic residues; it reads NKVETYKEQP. The segment covering 122-132 has biased composition (basic residues); the sequence is PGKKKKGKPGK.

Belongs to the parathyroid hormone family. As to quaternary structure, interacts with PTH1R (via N-terminal extracellular domain). There are 3 principal secretory forms, called PTHrP[1-36], PTHrP[38-94], and osteostatin (PTHrP[107-139]) arising from endoproteolytic cleavage of the initial translation product. Each of these secretory forms is believed to have one or more of its own receptors that mediates the normal paracrine, autocrine and endocrine actions. In terms of tissue distribution, ubiquitous. Also expressed in the mammary gland.

The protein localises to the secreted. It is found in the cytoplasm. It localises to the nucleus. In terms of biological role, neuroendocrine peptide which is a critical regulator of cellular and organ growth, development, migration, differentiation and survival and of epithelial calcium ion transport. Acts by binding to its receptor, PTH1R, activating G protein-coupled receptor signaling. Regulates endochondral bone development and epithelial-mesenchymal interactions during the formation of the mammary glands and teeth. Required for skeletal homeostasis. Promotes mammary mesenchyme differentiation and bud outgrowth by modulating mesenchymal cell responsiveness to BMPs. Up-regulates BMPR1A expression in the mammary mesenchyme and this increases the sensitivity of these cells to BMPs and allows them to respond to BMP4 in a paracrine and/or autocrine fashion. BMP4 signaling in the mesenchyme, in turn, triggers epithelial outgrowth and augments MSX2 expression, which causes the mammary mesenchyme to inhibit hair follicle formation within the nipple sheath. Promotes colon cancer cell migration and invasion in an integrin alpha-6/beta-1-dependent manner through activation of Rac1. Its function is as follows. Potent inhibitor of osteoclastic bone resorption. The protein is Parathyroid hormone-related protein of Homo sapiens (Human).